Here is a 253-residue protein sequence, read N- to C-terminus: Ribosome-inactivating protein saporin-5 (253 aa).

Glutamate 176 is a catalytic residue.

The protein belongs to the ribosome-inactivating protein family. Type 1 RIP subfamily.

The catalysed reaction is Endohydrolysis of the N-glycosidic bond at one specific adenosine on the 28S rRNA.. Ribosome-inactivating protein of type 1, inhibits protein synthesis in animal cells. The sequence is that of Ribosome-inactivating protein saporin-5 (SAP5) from Saponaria officinalis (Common soapwort).